The sequence spans 280 residues: Aspartate/glutamate leucyltransferase (280 aa).

It belongs to the R-transferase family. Bpt subfamily.

The protein resides in the cytoplasm. It carries out the reaction N-terminal L-glutamyl-[protein] + L-leucyl-tRNA(Leu) = N-terminal L-leucyl-L-glutamyl-[protein] + tRNA(Leu) + H(+). The catalysed reaction is N-terminal L-aspartyl-[protein] + L-leucyl-tRNA(Leu) = N-terminal L-leucyl-L-aspartyl-[protein] + tRNA(Leu) + H(+). Functionally, functions in the N-end rule pathway of protein degradation where it conjugates Leu from its aminoacyl-tRNA to the N-termini of proteins containing an N-terminal aspartate or glutamate. In Cereibacter sphaeroides (strain ATCC 17023 / DSM 158 / JCM 6121 / CCUG 31486 / LMG 2827 / NBRC 12203 / NCIMB 8253 / ATH 2.4.1.) (Rhodobacter sphaeroides), this protein is Aspartate/glutamate leucyltransferase.